A 1524-amino-acid polypeptide reads, in one-letter code: Protein dispatched homolog 1 (1524 aa).

Residue asparagine 59 is glycosylated (N-linked (GlcNAc...) asparagine). 4 helical membrane passes run 190–210 (VVVL…GVLV), 500–520 (LLMD…VMCV), 525–545 (MFIT…SYFL), and 549–569 (VFHF…LVGI). Positions 486-658 (GIEFGIKHSL…VTWLPAVVVL (173 aa)) constitute an SSD domain. Asparagine 582 carries an N-linked (GlcNAc...) asparagine glycan. 8 helical membrane-spanning segments follow: residues 604-624 (AALS…ANYV), 638-658 (GTAI…VVVL), 719-739 (YLWL…VCIN), 988-1008 (MGLS…NIII), 1010-1030 (LYAI…LVLL), 1040-1060 (VTIS…GVAY), 1079-1099 (VGSA…MMMP), and 1107-1127 (QLGT…TFFF).

The protein belongs to the dispatched family. As to quaternary structure, interacts with SHH via the cholesterol anchor of the dually lipid-modified SHH (ShhNp).

It is found in the membrane. In terms of biological role, functions in hedgehog (Hh) signaling. Regulates the release and extracellular accumulation of cholesterol-modified hedgehog proteins and is hence required for effective production of the Hh signal. Synergizes with SCUBE2 to cause an increase in SHH secretion. In Homo sapiens (Human), this protein is Protein dispatched homolog 1 (DISP1).